We begin with the raw amino-acid sequence, 208 residues long: Floral homeotic protein PISTILLATA (208 aa).

One can recognise an MADS-box domain in the interval Arg3 to Tyr57. Residues Ser75–Asn117 adopt a coiled-coil conformation. Positions His84–Ala170 constitute a K-box domain.

In terms of assembly, forms a heterodimer with APETALA3, capable of binding to CArG-box sequences. AP3/PI heterodimer binds AP1 or SEP3 to form a ternary complex.

It is found in the nucleus. Functionally, probable transcription factor involved in the genetic control of flower development. Is required for normal development of petals and stamens in the wild-type flower. Forms a heterodimer with APETALA3 that is required for autoregulation of both AP3 and PI genes. AP3/PI heterodimer interacts with APETALA1 or SEPALLATA3 to form a ternary complex that could be responsible for the regulation of the genes involved in the flower development. AP3/PI heterodimer activates the expression of NAP. AP3/PI prevents GATA22/GNL and GATA21/GNC expression. The sequence is that of Floral homeotic protein PISTILLATA (PI) from Arabidopsis thaliana (Mouse-ear cress).